A 352-amino-acid chain; its full sequence is N-terminal EF-hand calcium-binding protein 1 (352 aa).

Position 4 is a phosphoserine (Ser-4). 2 consecutive EF-hand domains span residues 26–61 (KGMS…GVLS) and 60–95 (LSGE…HLGE). Ca(2+) contacts are provided by Asp-39, Asn-41, Asp-43, Lys-45, and Glu-50. The stretch at 135-163 (LLKETLNQLQSLQNSLECAMETTEEQTRQ) forms a coiled coil. Positions 155-202 (ETTEEQTRQERQGPSKPEVLSIQWPGKRSSRRVQRHNSFSPNSPQFNV) are disordered. A compositionally biased stretch (polar residues) spans 190–202 (HNSFSPNSPQFNV). 2 positions are modified to phosphoserine: Ser-192 and Ser-197. Positions 209-275 (EEDNQWMTQI…EEFQLALKHY (67 aa)) form a coiled coil. In terms of domain architecture, ABM spans 252–340 (MLVQRQMSVT…LETPELTSTM (89 aa)).

Interacts with STX1. May interact with CPNE6.

The protein localises to the cytoplasm. The sequence is that of N-terminal EF-hand calcium-binding protein 1 (Necab1) from Rattus norvegicus (Rat).